The following is a 90-amino-acid chain: Antitoxin epsilon (90 aa).

This sequence belongs to the epsilon antitoxin family. In the presence of the zeta toxin, forms an inactive PezA(2)PezT(2) heterotetramer.

In terms of biological role, antitoxin component of a type II toxin-antitoxin (TA) system. Neutralizes the toxic effect of cognate zeta toxin. Part of a postsegregational killing (PSK) system involved in the killing of plasmid-free cells. Continuous synthesis of the epsilon antitoxin is required to counteract the zeta toxin. In Streptococcus agalactiae, this protein is Antitoxin epsilon.